The sequence spans 425 residues: Aspartic protease 2 (425 aa).

An N-terminal signal peptide occupies residues 1–16; that stretch reads MRSILVLVALIGCIAA. Residues 72–421 enclose the Peptidase A1 domain; that stretch reads YLGEITIGTP…DIEKKRIGFA (350 aa). Aspartate 90 is an active-site residue. The cysteines at positions 103 and 145 are disulfide-linked. N-linked (GlcNAc...) asparagine glycosylation is found at asparagine 163, asparagine 197, and asparagine 304. Residue aspartate 316 is part of the active site. Cysteine 351 and cysteine 382 are joined by a disulfide. 2 N-linked (GlcNAc...) asparagine glycosylation sites follow: asparagine 354 and asparagine 365.

It belongs to the peptidase A1 family. Post-translationally, cleaved into a mature form. Expressed in intestine, amphidal glands and excretory gland (at protein level).

Its subcellular location is the secreted. With respect to regulation, inhibited by pepstatin A. Its function is as follows. Aspartic protease which cleaves several human serum proteins including hemoglobin, fibrinogen and albumin. Appears to cleave preferentially between P1 (Ala, Leu, Val, Phe and Gly) and P1' (Ala and Leu) residues. This Necator americanus (Human hookworm) protein is Aspartic protease 2.